The sequence spans 112 residues: ATP synthase epsilon chain (112 aa).

Belongs to the ATPase epsilon chain family. As to quaternary structure, F-type ATPases have 2 components, CF(1) - the catalytic core - and CF(0) - the membrane proton channel. CF(1) has five subunits: alpha(3), beta(3), gamma(1), delta(1), epsilon(1). CF(0) has three main subunits: a, b and c.

Its subcellular location is the cell inner membrane. Functionally, produces ATP from ADP in the presence of a proton gradient across the membrane. In Rickettsia peacockii (strain Rustic), this protein is ATP synthase epsilon chain.